The primary structure comprises 173 residues: Putative pre-16S rRNA nuclease (173 aa).

It belongs to the YqgF nuclease family.

It is found in the cytoplasm. Could be a nuclease involved in processing of the 5'-end of pre-16S rRNA. This is Putative pre-16S rRNA nuclease from Rhodopirellula baltica (strain DSM 10527 / NCIMB 13988 / SH1).